The primary structure comprises 242 residues: MRCFKATIAYDGAYFLGYAKQPDKLGVQDKIESALNLLGIKSVVIAAGRTDKGVHANNQVLSFHAQKHWSADKLFYYLAPKLAPHIVLKKLEEKNFHARFDAQKRAYRYLLTKSLKTPFLAPYIACGDYGSLDSLNTALKQFIGKHDFSMFKKEGGAATNPKRIIFNAFAYKASIMGHECVVFKIIGDAFLRSSVRLIMQACVQYSLEKITLAEIKTQINNIKATIRTPIMANGLYLHRVHY.

D51 functions as the Nucleophile in the catalytic mechanism. Y107 lines the substrate pocket.

It belongs to the tRNA pseudouridine synthase TruA family. Homodimer.

It catalyses the reaction uridine(38/39/40) in tRNA = pseudouridine(38/39/40) in tRNA. Functionally, formation of pseudouridine at positions 38, 39 and 40 in the anticodon stem and loop of transfer RNAs. The sequence is that of tRNA pseudouridine synthase A from Helicobacter acinonychis (strain Sheeba).